We begin with the raw amino-acid sequence, 160 residues long: uncharacterized protein (160 aa).

An N-acetyltransferase domain is found at 7-151; it reads LLINFKTLEE…NPYIWHPDMD (145 aa).

This is an uncharacterized protein from Bacillus velezensis (strain DSM 23117 / BGSC 10A6 / LMG 26770 / FZB42) (Bacillus amyloliquefaciens subsp. plantarum).